The sequence spans 1168 residues: MSTTEPSPENDRDPQPTTISTPTSTNAKLLKKIPAIPFRHSDKEGEDEQAKTDEVTTELAGEGPMSHDSPEILAPSSLGLNHIRTKSSPAPSPLRFSSATPLISPGQDDKDVAKEKPRVGVVDARADARARWPIPPHQPDQGKKVQWSQSKSQRVPANSNPGVESTHVGLAKETQSPRFQAILRVTSGRKKKAHDIKSFSHELNSKGVRPFPVWRSRAVGHMEEIMAAIRTKFDKQKEDVDADLGVFAGYLVTTLESTPESNKELRVGLEDLLVEARQCATMPASEFWLKCEGIVQKLDDKRQELPMGGLKQAHNRLLFILTRCNRLVQFRKESGYVEEHILGMHQLSDLGVYPEQMVEISRQQDLLREKEIQKINEKQNLAGKQDDQNSNSGADGVEVNTARSTDSTSSNFRMSSWKKLPSAAEKNRSLNNTPKAKGESKIQPKVYGDENAENLHSPSGQPASADRSALWGFWADHQCVTYDNSMICRICEVEIPVVHVEEHSRICTIADRCDLKGINVNLRLERVAESLEKILESWTPKSSVTPRAVADSARLSNSSRQEDLDEISQRCSDDMLDCVPRSQNTFSLDELNILNEMSMTNGTKDSSAGSLTPPSPATPRNSQVDLLLSGRKTISELENYQQINKLLDIARSVANVNVCGYSSLDFMIEQLDELKYVIQDRKADALVVETFGRRIEKLLQEKYIELCGLIDDEKVDSSNAMPDEESSADEDTVRSLRASPLNPRAKDRTSIEDFEIIKPISRGAFGRVFLAKKRATGDLFAIKVLKKADMIRKNAVESILAERNILISVRNPFVVRFFYSFTCRENLYLVMEYLNGGDLFSLLRNLGCLDEDMARIYIAEVVLALEYLHSVNIIHRDLKPDNLLINQDGHIKLTDFGLSKVGLINSTDDLSGESSLGNSGFFAEDGSKAQHSQGKDSRKKHAVVGTPDYLAPEILLGMGHGKTADWWSVGVILFEVLVGIPPFNAETPQQIFENIINRDIPWPNVPEEISYEAHDLINKLLTENPVQRLGATGAGEVKQHHFFKDINWDTLARQKAMFVPSAEPQDTSYFMSRYIWNPEDENVHGGSDFDDLTDTCSSSSFNTQEEDGDECGSLAEFGNGPNLAVKYSFSNFSFKNLSQLASINYDLVLKNAKESVEASNQSAPRPET.

2 disordered regions span residues 1–165 (MSTT…GVES) and 377–444 (EKQN…KIQP). The span at 16-25 (PTTISTPTST) shows a compositional bias: low complexity. Composition is skewed to basic and acidic residues over residues 39–54 (RHSD…KTDE) and 107–130 (QDDK…DARA). Polar residues-rich tracts occupy residues 146–163 (QWSQ…NPGV) and 401–414 (TARS…NFRM). A C2H2-type; atypical zinc finger spans residues 488–507 (CRICEVEIPVVHVEEHSRIC). Disordered regions lie at residues 546 to 566 (PRAV…DLDE), 602 to 622 (GTKD…PRNS), and 717 to 744 (SSNA…LNPR). Positions 754–1043 (FEIIKPISRG…AGEVKQHHFF (290 aa)) constitute a Protein kinase domain. ATP contacts are provided by residues 760–768 (ISRGAFGRV) and Lys783. Catalysis depends on Asp877, which acts as the Proton acceptor. In terms of domain architecture, AGC-kinase C-terminal spans 1044 to 1144 (KDINWDTLAR…KNLSQLASIN (101 aa)).

The protein belongs to the protein kinase superfamily. AGC Ser/Thr protein kinase family. Highly expressed in roots, elongating root hair cells and pollen grains.

It carries out the reaction L-seryl-[protein] + ATP = O-phospho-L-seryl-[protein] + ADP + H(+). The enzyme catalyses L-threonyl-[protein] + ATP = O-phospho-L-threonyl-[protein] + ADP + H(+). In terms of biological role, modulates root tip growth. May play a common role in the tip growth of plant cells. The protein is Probable serine/threonine protein kinase IRE of Arabidopsis thaliana (Mouse-ear cress).